A 45-amino-acid chain; its full sequence is Iota-conotoxin-like R11.13 (45 aa).

Cystine bridges form between cysteine 5–cysteine 19, cysteine 12–cysteine 22, cysteine 18–cysteine 27, and cysteine 21–cysteine 36. D-leucine is present on leucine 43. Residue arginine 45 is a propeptide, removed by a carboxypeptidase.

It belongs to the conotoxin I1 superfamily. Expressed by the venom duct.

Its subcellular location is the secreted. In terms of biological role, iota-conotoxins bind to voltage-gated sodium channels (Nav) and act as agonists by shifting the voltage-dependence of activation to more hyperpolarized levels. Produces general excitatory symptoms. This is Iota-conotoxin-like R11.13 from Conus radiatus (Rayed cone).